Reading from the N-terminus, the 197-residue chain is ATP-dependent Clp protease proteolytic subunit (197 aa).

Ser98 acts as the Nucleophile in catalysis. The active site involves His123.

It belongs to the peptidase S14 family. As to quaternary structure, fourteen ClpP subunits assemble into 2 heptameric rings which stack back to back to give a disk-like structure with a central cavity, resembling the structure of eukaryotic proteasomes.

It localises to the cytoplasm. It catalyses the reaction Hydrolysis of proteins to small peptides in the presence of ATP and magnesium. alpha-casein is the usual test substrate. In the absence of ATP, only oligopeptides shorter than five residues are hydrolyzed (such as succinyl-Leu-Tyr-|-NHMec, and Leu-Tyr-Leu-|-Tyr-Trp, in which cleavage of the -Tyr-|-Leu- and -Tyr-|-Trp bonds also occurs).. Functionally, cleaves peptides in various proteins in a process that requires ATP hydrolysis. Has a chymotrypsin-like activity. Plays a major role in the degradation of misfolded proteins. The chain is ATP-dependent Clp protease proteolytic subunit from Lysinibacillus sphaericus (strain C3-41).